Reading from the N-terminus, the 509-residue chain is DNA primase DnaG (509 aa).

The Toprim domain occupies 167-253 (DAIVVVEGRA…CVEDLARHEV (87 aa)). Mg(2+) contacts are provided by glutamate 173, aspartate 215, and aspartate 217. Residues 267–411 (KQAASDDADP…ASTDEQPKTL (145 aa)) are disordered. Composition is skewed to low complexity over residues 313 to 331 (PVSSPESPAESPAADETAA) and 383 to 402 (ESTAAEAPESSADGPAAAGA).

It belongs to the archaeal DnaG primase family. As to quaternary structure, forms a ternary complex with MCM helicase and DNA. It depends on Mg(2+) as a cofactor.

It carries out the reaction ssDNA + n NTP = ssDNA/pppN(pN)n-1 hybrid + (n-1) diphosphate.. RNA polymerase that catalyzes the synthesis of short RNA molecules used as primers for DNA polymerase during DNA replication. The polypeptide is DNA primase DnaG (Natronomonas pharaonis (strain ATCC 35678 / DSM 2160 / CIP 103997 / JCM 8858 / NBRC 14720 / NCIMB 2260 / Gabara) (Halobacterium pharaonis)).